The primary structure comprises 142 residues: Low molecular weight protein-tyrosine-phosphatase Ptp (142 aa).

Catalysis depends on C10, which acts as the Nucleophile. R16 is an active-site residue. D115 serves as the catalytic Proton donor.

Belongs to the low molecular weight phosphotyrosine protein phosphatase family.

It carries out the reaction O-phospho-L-tyrosyl-[protein] + H2O = L-tyrosyl-[protein] + phosphate. It participates in glycan metabolism; exopolysaccharide biosynthesis. Its activity is regulated as follows. Inhibited by ammonium molybdate, sodium orthovanadate, N-ethylmaleimide and iodoacetic acid. Its function is as follows. Dephosphorylates ptk. May be involved in the production and the transport of exopolysaccharides. This Acinetobacter johnsonii protein is Low molecular weight protein-tyrosine-phosphatase Ptp (ptp).